The following is a 472-amino-acid chain: Nuclear hormone receptor family member nhr-2 (472 aa).

Composition is skewed to polar residues over residues 57 to 83, 90 to 112, 138 to 147, and 159 to 171; these read TATNSTYMPPQSKNTVTPNATSPLSQI, NDTISPPLTSQNSATTPNYHNQP, LSSTQSSPDN, and VRRNTFPASSAST. Disordered stretches follow at residues 57–112 and 138–184; these read TATN…HNQP and LSST…RTNT. Positions 215-297 form a DNA-binding region, nuclear receptor; the sequence is KDRCMVCGDN…VGMNRDNVRV (83 aa). 2 NR C4-type zinc fingers span residues 218–238 and 267–285; these read CMVCGDNSTGYHYGVQSCEGC and CAANRGVRTRCQACRFAKC.

The protein belongs to the nuclear hormone receptor family.

It localises to the nucleus. Orphan nuclear receptor. This chain is Nuclear hormone receptor family member nhr-2 (nhr-2), found in Caenorhabditis elegans.